A 514-amino-acid chain; its full sequence is Alpha-amylase (514 aa).

A signal peptide spans 1–31 (MIQKRKRTVSFRLVLMCTLLFVSLPITKTSA). Ca(2+)-binding residues include Asn133, Asp190, Ala212, Asp214, Asp225, Asp231, Asp233, and Asp235. A Na(+)-binding site is contributed by Asp190. Na(+)-binding residues include Asp214, Asp225, and Asp231. Asp262 acts as the Nucleophile in catalysis. His266 lines the Ca(2+) pocket. Glu292 serves as the catalytic Proton donor. Residues Gly331, Asp438, and Asp461 each coordinate Ca(2+).

Belongs to the glycosyl hydrolase 13 family. In terms of assembly, monomer. The cofactor is Ca(2+). Na(+) serves as cofactor.

Its subcellular location is the secreted. It catalyses the reaction Endohydrolysis of (1-&gt;4)-alpha-D-glucosidic linkages in polysaccharides containing three or more (1-&gt;4)-alpha-linked D-glucose units.. The chain is Alpha-amylase from Bacillus amyloliquefaciens (Bacillus velezensis).